The primary structure comprises 543 residues: ABC transport system permease protein p69 (543 aa).

12 consecutive transmembrane segments (helical) span residues 18 to 38 (IWYW…YSWI), 78 to 98 (AFFV…FSYW), 115 to 135 (ITIV…SNLF), 141 to 161 (ATLT…TTFF), 211 to 231 (TLLS…PLSI), 237 to 257 (LVLI…VVVF), 288 to 308 (IIFI…LVTI), 354 to 374 (ISLI…SCNL), 379 to 399 (FSIS…ILLF), 413 to 433 (IILV…SINF), 482 to 502 (LILF…NFFE), and 510 to 530 (GSVT…FLSV). The ABC transmembrane type-1 domain occupies 74-256 (LAQTAFFVTG…TFLIFIEVVV (183 aa)).

This sequence belongs to the binding-protein-dependent transport system permease family.

The protein localises to the cell membrane. Functionally, probably part of a high-affinity transport system. The chain is ABC transport system permease protein p69 (p69) from Mycoplasma genitalium (strain ATCC 33530 / DSM 19775 / NCTC 10195 / G37) (Mycoplasmoides genitalium).